Reading from the N-terminus, the 268-residue chain is 4-hydroxy-tetrahydrodipicolinate reductase (268 aa).

NAD(+) is bound by residues 8–13 and glutamate 34; that span reads GAAGRM. Arginine 35 contributes to the NADP(+) binding site. NAD(+) contacts are provided by residues 96–98 and 120–123; these read GST and SPNM. Catalysis depends on histidine 153, which acts as the Proton donor/acceptor. Histidine 154 contacts (S)-2,3,4,5-tetrahydrodipicolinate. The active-site Proton donor is lysine 157. Residue 163-164 participates in (S)-2,3,4,5-tetrahydrodipicolinate binding; it reads GT.

This sequence belongs to the DapB family.

It localises to the cytoplasm. The catalysed reaction is (S)-2,3,4,5-tetrahydrodipicolinate + NAD(+) + H2O = (2S,4S)-4-hydroxy-2,3,4,5-tetrahydrodipicolinate + NADH + H(+). The enzyme catalyses (S)-2,3,4,5-tetrahydrodipicolinate + NADP(+) + H2O = (2S,4S)-4-hydroxy-2,3,4,5-tetrahydrodipicolinate + NADPH + H(+). It functions in the pathway amino-acid biosynthesis; L-lysine biosynthesis via DAP pathway; (S)-tetrahydrodipicolinate from L-aspartate: step 4/4. In terms of biological role, catalyzes the conversion of 4-hydroxy-tetrahydrodipicolinate (HTPA) to tetrahydrodipicolinate. This Anaeromyxobacter sp. (strain Fw109-5) protein is 4-hydroxy-tetrahydrodipicolinate reductase.